The primary structure comprises 258 residues: MKLDDIKISRAIVEGYMEDLLDYMEMDVAIGGGGPSGLTAGYYLARAGLKVALFERKLSIGGGMWGGGMMFNKIVVQDEGREILDEFGIRSEPYDEGYHVADSVEATSTLCSRACQAGLKIFNLMSIEDVMIRDEGITGLVLNWSSVEMAGLHVDPLTVRARAVIDATGHDCEIVKVVERKIGPELNTPDGRIQGERSMWADVGEAALIENTREVYPNLYVAGMASNAVYGAPRMGPIFGGMLVSGRRVAEMIIEKLK.

NAD(+) is bound by residues serine 36, 55–56 (ER), glycine 63, isoleucine 127, and 153–155 (HVD). Aspartate 155 and histidine 170 together coordinate Fe cation. Methionine 224 serves as a coordination point for NAD(+). Arginine 234 lines the glycine pocket.

Belongs to the THI4 family. In terms of assembly, homooctamer; tetramer of dimers. The cofactor is Fe(2+).

The enzyme catalyses hydrogen sulfide + glycine + NAD(+) = ADP-5-ethyl-4-methylthiazole-2-carboxylate + nicotinamide + 3 H2O + H(+). Its pathway is cofactor biosynthesis; thiamine diphosphate biosynthesis. Functionally, involved in the biosynthesis of the thiazole moiety of thiamine. Catalyzes the conversion of NAD and glycine to adenosine diphosphate 5-(2-hydroxyethyl)-4-methylthiazole-2-carboxylate (ADT), an adenylated thiazole intermediate, using free sulfide as a source of sulfur. The polypeptide is Thiamine thiazole synthase (Methanothermobacter thermautotrophicus (strain ATCC 29096 / DSM 1053 / JCM 10044 / NBRC 100330 / Delta H) (Methanobacterium thermoautotrophicum)).